We begin with the raw amino-acid sequence, 228 residues long: Probable septum site-determining protein MinC (228 aa).

This sequence belongs to the MinC family. In terms of assembly, interacts with MinD and FtsZ.

Its function is as follows. Cell division inhibitor that blocks the formation of polar Z ring septums. Rapidly oscillates between the poles of the cell to destabilize FtsZ filaments that have formed before they mature into polar Z rings. Prevents FtsZ polymerization. This is Probable septum site-determining protein MinC from Pectobacterium atrosepticum (strain SCRI 1043 / ATCC BAA-672) (Erwinia carotovora subsp. atroseptica).